The sequence spans 107 residues: MVRYRMRSPSEGPHQGPGQDHEREEQGQGQGLSPERVEDYGRTHRGHHHHRHRRCSRKRLHRIHKRRRSCRRRRRHSCRHRRRHRRGCRRSRRRRRCRCRKCRRHHH.

Residues 1–94 (MVRYRMRSPS…RRGCRRSRRR (94 aa)) are disordered. Phosphoserine is present on residues serine 8, serine 10, and serine 33. The segment covering 43–94 (THRGHHHHRHRRCSRKRLHRIHKRRRSCRRRRRHSCRHRRRHRRGCRRSRRR) has biased composition (basic residues).

It belongs to the protamine P2 family. As to quaternary structure, interacts with TDRP. In terms of processing, proteolytic processing into mature chains is required for histone eviction during spermatogenesis. Transition proteins (TNP1 and TNP2) are required for processing. In terms of tissue distribution, expressed in spermatids (at protein level).

It localises to the nucleus. It is found in the chromosome. In terms of biological role, protamines substitute for histones in the chromatin of sperm during the haploid phase of spermatogenesis. They compact sperm DNA into a highly condensed, stable and inactive complex. In Mus musculus (Mouse), this protein is Protamine-2 (Prm2).